A 148-amino-acid polypeptide reads, in one-letter code: Putative nickel-responsive regulator (148 aa).

Ni(2+) contacts are provided by His77, His88, His90, and Cys96.

Belongs to the transcriptional regulatory CopG/NikR family. It depends on Ni(2+) as a cofactor.

In terms of biological role, transcriptional regulator. The sequence is that of Putative nickel-responsive regulator from Bradyrhizobium diazoefficiens (strain JCM 10833 / BCRC 13528 / IAM 13628 / NBRC 14792 / USDA 110).